Here is a 193-residue protein sequence, read N- to C-terminus: Ion-translocating oxidoreductase complex subunit A (193 aa).

6 helical membrane passes run 5 to 25 (LLLF…FLGL), 47 to 67 (FVMT…LVPL), 72 to 92 (LRTM…EMVV), 102 to 122 (LLGI…VALL), 134 to 154 (ALYG…FAAI), and 171 to 191 (AIAL…SGLV).

This sequence belongs to the NqrDE/RnfAE family. As to quaternary structure, the complex is composed of six subunits: RnfA, RnfB, RnfC, RnfD, RnfE and RnfG.

The protein resides in the cell inner membrane. Its function is as follows. Part of a membrane-bound complex that couples electron transfer with translocation of ions across the membrane. This is Ion-translocating oxidoreductase complex subunit A from Cronobacter sakazakii (strain ATCC BAA-894) (Enterobacter sakazakii).